Consider the following 284-residue polypeptide: Tropomyosin Per a 7.0102 (284 aa).

A coiled-coil region spans residues 1 to 266 (MDAIKKKMQA…EDELVHEKEK (266 aa)).

Belongs to the tropomyosin family. Homodimer. In terms of tissue distribution, expressed in striated skeletal muscle (at protein level).

In terms of biological role, tropomyosin, in association with the troponin complex, plays a central role in the calcium dependent regulation of muscle contraction. The protein is Tropomyosin Per a 7.0102 of Periplaneta americana (American cockroach).